The following is a 456-amino-acid chain: Adenylyltransferase and sulfurtransferase uba4 (456 aa).

Residues Gly101, Asp122, 129-133, Lys146, and 161-162 contribute to the ATP site; these read SNLHR and DH. Zn(2+) contacts are provided by Cys210 and Cys213. Catalysis depends on Cys227, which acts as the Glycyl thioester intermediate; for adenylyltransferase activity. Zn(2+) is bound by residues Cys300 and Cys303. Positions 350-454 constitute a Rhodanese domain; sequence KEKEHLLIDV…WKEQVDGSWP (105 aa). Cys409 serves as the catalytic Cysteine persulfide intermediate; for sulfurtransferase activity.

It in the N-terminal section; belongs to the HesA/MoeB/ThiF family. UBA4 subfamily. Zn(2+) is required as a cofactor.

The protein resides in the cytoplasm. It localises to the cytosol. It carries out the reaction [molybdopterin-synthase sulfur-carrier protein]-C-terminal Gly-Gly + ATP + H(+) = [molybdopterin-synthase sulfur-carrier protein]-C-terminal Gly-Gly-AMP + diphosphate. The enzyme catalyses [molybdopterin-synthase sulfur-carrier protein]-C-terminal Gly-Gly-AMP + S-sulfanyl-L-cysteinyl-[cysteine desulfurase] + AH2 = [molybdopterin-synthase sulfur-carrier protein]-C-terminal-Gly-aminoethanethioate + L-cysteinyl-[cysteine desulfurase] + A + AMP + 2 H(+). Its pathway is tRNA modification; 5-methoxycarbonylmethyl-2-thiouridine-tRNA biosynthesis. Plays a central role in 2-thiolation of mcm(5)S(2)U at tRNA wobble positions of cytosolic tRNA(Lys), tRNA(Glu) and tRNA(Gln). Also essential during biosynthesis of the molybdenum cofactor. Acts by mediating the C-terminal thiocarboxylation of sulfur carriers urm1 and mocs2a. Its N-terminus first activates urm1 and mocs2a as acyl-adenylates (-COAMP), then the persulfide sulfur on the catalytic cysteine is transferred to urm1 and mocs2a to form thiocarboxylation (-COSH) of their C-terminus. The reaction probably involves hydrogen sulfide that is generated from the persulfide intermediate and that acts as a nucleophile towards urm1 and mocs2a. Subsequently, a transient disulfide bond is formed. Does not use thiosulfate as sulfur donor; nfs1 probably acting as a sulfur donor for thiocarboxylation reactions. This chain is Adenylyltransferase and sulfurtransferase uba4, found in Sclerotinia sclerotiorum (strain ATCC 18683 / 1980 / Ss-1) (White mold).